Here is a 97-residue protein sequence, read N- to C-terminus: Large ribosomal subunit protein eL21 (97 aa).

Positions 1-12 (MPSSNGPRQATR) are enriched in polar residues. A disordered region spans residues 1–35 (MPSSNGPRQATRNKLKNDARERGTSPPQRSIEEYD).

The protein belongs to the eukaryotic ribosomal protein eL21 family.

This Natronomonas pharaonis (strain ATCC 35678 / DSM 2160 / CIP 103997 / JCM 8858 / NBRC 14720 / NCIMB 2260 / Gabara) (Halobacterium pharaonis) protein is Large ribosomal subunit protein eL21.